A 502-amino-acid polypeptide reads, in one-letter code: Putative F-box/FBD/LRR-repeat protein At5g22610 (502 aa).

One can recognise an F-box domain in the interval 17–63; it reads EDLISKLPEVLLSQILSYLPTKDIVRTSVLSKRWKSVWLLIPGLDLD. 7 LRR repeats span residues 70–98, 99–127, 147–180, 181–206, 208–228, 238–263, and 344–373; these read YDTF…KLSI, QKNE…DVEF, CKTL…CLEE, NVYS…TIVK, DDNV…SVGY, YYYD…TFNN, and SVWL…VLET. The FBD domain occupies 384 to 435; the sequence is VERRVSSVPECLLSSLEFVEIKNRISVDDGALEVARYFVENSVNLQKVVLRL.

The protein is Putative F-box/FBD/LRR-repeat protein At5g22610 of Arabidopsis thaliana (Mouse-ear cress).